A 361-amino-acid polypeptide reads, in one-letter code: 45 kDa calcium-binding protein (361 aa).

Residues 1–35 (MVWLVAMTPRQSSLCGLAAHGLWFLGLVLLMDATA) form the signal peptide. An N-linked (GlcNAc...) asparagine glycan is attached at N39. 2 EF-hand domains span residues 97 to 132 (RSRR…KTAE) and 136 to 171 (EAVK…SKGH). S98 carries the phosphoserine modification. Ca(2+)-binding residues include D110, N112, D114, R116, E121, D149, D151, D153, H155, and E160. Residue T192 is modified to Phosphothreonine. EF-hand domains lie at 196 to 231 (LGNL…HSRG), 232 to 267 (MLKF…TVEN), 277 to 312 (WVKD…MNEY), and 313 to 348 (NALN…FTGS). D212 lines the Ca(2+) pocket. T216 is modified (phosphothreonine). The Ca(2+) site is built by E219, D245, D247, D249, Q251, and E256. T264 is subject to Phosphothreonine. D290, N292, and D294 together coordinate Ca(2+). A Phosphothreonine modification is found at T298. Ca(2+) contacts are provided by E301, D326, N328, N330, H332, and E337. The interval 308-361 (PMNEYNALNEAKQMIAIADENQNHHLEPEEILKYSEFFTGSKLMDYARNVHEEF) is necessary for intracellular retention in Golgi apparatus lumen.

Belongs to the CREC family. As to expression, ubiquitous.

It localises to the golgi apparatus lumen. Its function is as follows. May regulate calcium-dependent activities in the endoplasmic reticulum lumen or post-ER compartment. The protein is 45 kDa calcium-binding protein (Sdf4) of Mus musculus (Mouse).